We begin with the raw amino-acid sequence, 137 residues long: Small ribosomal subunit protein uS12 (137 aa).

D102 carries the post-translational modification 3-methylthioaspartic acid.

This sequence belongs to the universal ribosomal protein uS12 family. Part of the 30S ribosomal subunit. Contacts proteins S8 and S17. May interact with IF1 in the 30S initiation complex.

In terms of biological role, with S4 and S5 plays an important role in translational accuracy. Interacts with and stabilizes bases of the 16S rRNA that are involved in tRNA selection in the A site and with the mRNA backbone. Located at the interface of the 30S and 50S subunits, it traverses the body of the 30S subunit contacting proteins on the other side and probably holding the rRNA structure together. The combined cluster of proteins S8, S12 and S17 appears to hold together the shoulder and platform of the 30S subunit. In Mesoplasma florum (strain ATCC 33453 / NBRC 100688 / NCTC 11704 / L1) (Acholeplasma florum), this protein is Small ribosomal subunit protein uS12.